Consider the following 155-residue polypeptide: Probable jacalin-related lectin 26 (155 aa).

A run of 2 helical transmembrane segments spans residues 26–48 and 127–149; these read AYLY…IAMI and VSFV…VLFL. In terms of domain architecture, Jacalin-type lectin spans 47 to 155; it reads MIRAGSVGKK…VLFLMKFKRS (109 aa).

The protein belongs to the jacalin lectin family.

It localises to the membrane. The sequence is that of Probable jacalin-related lectin 26 (JAL26) from Arabidopsis thaliana (Mouse-ear cress).